The following is a 653-amino-acid chain: Extracellular metalloproteinase (653 aa).

The first 19 residues, 1-19 (MRSFLLASLASLSVISVYG), serve as a signal peptide directing secretion. Positions 20 to 244 (HPHARSTLTR…VHAVVDYSAD (225 aa)) are excised as a propeptide. Residues asparagine 327, asparagine 336, and asparagine 412 are each glycosylated (N-linked (GlcNAc...) asparagine). Histidine 429 provides a ligand contact to Zn(2+). The active site involves glutamate 430. Residue histidine 433 coordinates Zn(2+). Residues asparagine 636 and asparagine 637 are each glycosylated (N-linked (GlcNAc...) asparagine).

The protein belongs to the peptidase M36 family. Zn(2+) is required as a cofactor.

It localises to the secreted. Functionally, secreted metalloproteinase that allows assimilation of proteinaceous substrates. This is Extracellular metalloproteinase (MEP) from Pyrenophora tritici-repentis (strain Pt-1C-BFP) (Wheat tan spot fungus).